We begin with the raw amino-acid sequence, 202 residues long: Small ribosomal subunit protein uS2 (202 aa).

It belongs to the universal ribosomal protein uS2 family. As to quaternary structure, part of the 30S ribosomal subunit.

The polypeptide is Small ribosomal subunit protein uS2 (Pyrococcus furiosus (strain ATCC 43587 / DSM 3638 / JCM 8422 / Vc1)).